The following is a 212-amino-acid chain: Large ribosomal subunit protein uL4 (212 aa).

Positions 54-65 (SQKSRSDVSGSN) are enriched in polar residues. The disordered stretch occupies residues 54-85 (SQKSRSDVSGSNKKPWRQKGTGRARSGSVKSP).

The protein belongs to the universal ribosomal protein uL4 family. In terms of assembly, part of the 50S ribosomal subunit.

Functionally, one of the primary rRNA binding proteins, this protein initially binds near the 5'-end of the 23S rRNA. It is important during the early stages of 50S assembly. It makes multiple contacts with different domains of the 23S rRNA in the assembled 50S subunit and ribosome. Its function is as follows. Forms part of the polypeptide exit tunnel. This Blochmanniella floridana protein is Large ribosomal subunit protein uL4.